The following is an 871-amino-acid chain: Serrate RNA effector molecule homolog (871 aa).

Residues 1–90 (MGDSDDEYDR…RRDWDGHSSD (90 aa)) are disordered. At glycine 2 the chain carries N-acetylglycine. Serine 4 bears the Phosphoserine mark. Tyrosine 8 carries the phosphotyrosine modification. Over residues 8–73 (YDRRRRDKFR…ERFSPPRHEL (66 aa)) the composition is skewed to basic and acidic residues. Phosphoserine is present on residues serine 67, serine 74, and serine 136. Lysine 150 is covalently cross-linked (Glycyl lysine isopeptide (Lys-Gly) (interchain with G-Cter in SUMO2)). A disordered region spans residues 272-411 (EEEEQAGKPG…KPKDAAGLEC (140 aa)). Residues 297–347 (DGERKTNDKDEKKEDSKQAENDSSNDDKTKKSEGDGDKEEKKEDSEKEAKK) show a composition bias toward basic and acidic residues. Acidic residues predominate over residues 370–385 (SESESESGQAEEEKEE). Basic and acidic residues predominate over residues 386–411 (AEALKEKEKPKEEEWEKPKDAAGLEC). Phosphoserine occurs at positions 492 and 539. Threonine 543 is modified (phosphothreonine). Position 569 is a phosphoserine (serine 569). The segment at 574–597 (ELLGSSGGAPPEEPPKEGNPAEIN) is disordered. A Phosphothreonine modification is found at threonine 670. Phosphoserine is present on serine 678. Omega-N-methylarginine is present on residues arginine 828, arginine 835, and arginine 845. The interval 830–849 (NYDAFRGQGGYPGKPRNRMV) is disordered.

Belongs to the ARS2 family. Interacts with CASP8AP2, ERBB4, NCBP1/CBP80 and DROSHA. Interacts with LUZP4. Interacts with NCBP2/CBP20 and NCBP3. Interacts with MTREX.

It is found in the nucleus. The protein resides in the nucleoplasm. The protein localises to the cytoplasm. Acts as a mediator between the cap-binding complex (CBC) and the primary microRNAs (miRNAs) processing machinery during cell proliferation. Contributes to the stability and delivery of capped primary miRNA transcripts to the primary miRNA processing complex containing DGCR8 and DROSHA, thereby playing a role in RNA-mediated gene silencing (RNAi) by miRNAs. Binds capped RNAs (m7GpppG-capped RNA); however interaction is probably mediated via its interaction with NCBP1/CBP80 component of the CBC complex. Involved in cell cycle progression at S phase. Does not directly confer arsenite resistance but rather modulates arsenic sensitivity. Independently of its activity on miRNAs, necessary and sufficient to promote neural stem cell self-renewal. Does so by directly binding SOX2 promoter and positively regulating its transcription. This is Serrate RNA effector molecule homolog (SRRT) from Pongo abelii (Sumatran orangutan).